Here is a 261-residue protein sequence, read N- to C-terminus: MLSNSDSKHGQKAYWCVVSGSDLWLVDGQLPLATSNELNLVAEKAQKIGSYNNHPVMWLNEADVEQSLEMHSLRECLHFPEPLFLLMSKAIQYGHMTQTMRFCPQCGGRNHLNHNQLAMQCGECRTLHYPRIFPCIIVAVRKQQHILLAQHPRHRSGMYTVIAGFVEVGETLEQCVAREVKEETGIEVTNIRYFGSQPWAFPSSMMMAFLADYHAGELKPDYSELADAKWFTSDNLPPVAPTGTIARALIEQTLLNMRSDS.

Arg74 is a binding site for substrate. Residues Cys103, Cys106, Cys121, and Cys124 each contribute to the Zn(2+) site. Tyr129 is a substrate binding site. Residues 130–253 (PRIFPCIIVA…TIARALIEQT (124 aa)) form the Nudix hydrolase domain. Positions 163, 179, and 183 each coordinate a divalent metal cation. Residues 164-185 (GFVEVGETLEQCVAREVKEETG) carry the Nudix box motif. 197–204 (QPWAFPSS) contributes to the substrate binding site. Residue Glu224 participates in a divalent metal cation binding. Ala246 lines the substrate pocket.

This sequence belongs to the Nudix hydrolase family. NudC subfamily. Homodimer. Mg(2+) is required as a cofactor. It depends on Mn(2+) as a cofactor. Requires Zn(2+) as cofactor.

It carries out the reaction a 5'-end NAD(+)-phospho-ribonucleoside in mRNA + H2O = a 5'-end phospho-adenosine-phospho-ribonucleoside in mRNA + beta-nicotinamide D-ribonucleotide + 2 H(+). The catalysed reaction is NAD(+) + H2O = beta-nicotinamide D-ribonucleotide + AMP + 2 H(+). The enzyme catalyses NADH + H2O = reduced beta-nicotinamide D-ribonucleotide + AMP + 2 H(+). In terms of biological role, mRNA decapping enzyme that specifically removes the nicotinamide adenine dinucleotide (NAD) cap from a subset of mRNAs by hydrolyzing the diphosphate linkage to produce nicotinamide mononucleotide (NMN) and 5' monophosphate mRNA. The NAD-cap is present at the 5'-end of some mRNAs and stabilizes RNA against 5'-processing. Has preference for mRNAs with a 5'-end purine. Catalyzes the hydrolysis of a broad range of dinucleotide pyrophosphates. This chain is NAD-capped RNA hydrolase NudC, found in Vibrio vulnificus (strain CMCP6).